The primary structure comprises 466 residues: Oryzain beta chain (466 aa).

An N-terminal signal peptide occupies residues 1–21; it reads MAARAAAAAFLLLLIVGAATA. A propeptide spans 22-140 (activation peptide); sequence APDMSIISYN…ERYRHDGVEE (119 aa). 3 cysteine pairs are disulfide-bonded: cysteine 162–cysteine 205, cysteine 196–cysteine 238, and cysteine 296–cysteine 347. Residue cysteine 165 is part of the active site. Catalysis depends on residues histidine 302 and asparagine 322. The N-linked (GlcNAc...) asparagine glycan is linked to asparagine 341. Positions 358-380 are disordered; sequence KSGANPPKPSPTPPTPPTPPPPS. A propeptide spans 362 to 466 (removed in mature form); it reads NPPKPSPTPP…KRTLAKLNTA (105 aa). Residues 363 to 380 show a composition bias toward pro residues; that stretch reads PPKPSPTPPTPPTPPPPS. 2 cysteine pairs are disulfide-bonded: cysteine 386-cysteine 398 and cysteine 392-cysteine 413. Asparagine 389 is a glycosylation site (N-linked (GlcNAc...) asparagine).

The protein belongs to the peptidase C1 family. In terms of tissue distribution, expressed only in seeds.

Its function is as follows. Probable thiol protease. In Oryza sativa subsp. japonica (Rice), this protein is Oryzain beta chain.